Consider the following 541-residue polypeptide: Formimidoyltransferase-cyclodeaminase (541 aa).

Positions 1-181 are formiminotransferase N-subdomain; that stretch reads MSQLVECVPN…GATVTGARKF (181 aa). H82 functions as the For formimidoyltransferase activity in the catalytic mechanism. 163 to 172 lines the folate pocket; that stretch reads GPSSFVPSWG. Residues 182 to 326 form a formiminotransferase C-subdomain region; sequence LIAFNINLLS…PKERIIEYLV (145 aa). The segment at 327-334 is linker; that stretch reads PDSGPEQS. The interval 335 to 541 is cyclodeaminase/cyclohydrolase; sequence LLDASLRAFV…VLGSLEARKE (207 aa). The For cyclodeaminase activity role is filled by D412. Position 520 is a phosphoserine (S520).

The protein in the C-terminal section; belongs to the cyclodeaminase/cyclohydrolase family. In the N-terminal section; belongs to the formiminotransferase family. As to quaternary structure, homooctamer, including four polyglutamate binding sites. The subunits are arranged as a tetramer of dimers, and form a planar ring-shaped structure. As to expression, specifically expressed in liver (at protein level).

It is found in the cytoplasm. Its subcellular location is the cytosol. The protein resides in the golgi apparatus. It localises to the cytoskeleton. The protein localises to the microtubule organizing center. It is found in the centrosome. Its subcellular location is the centriole. The catalysed reaction is 5-formimidoyltetrahydrofolate + L-glutamate = N-formimidoyl-L-glutamate + (6S)-5,6,7,8-tetrahydrofolate. It catalyses the reaction 5-formimidoyltetrahydrofolate + 2 H(+) = (6R)-5,10-methenyltetrahydrofolate + NH4(+). It functions in the pathway amino-acid degradation; L-histidine degradation into L-glutamate; L-glutamate from N-formimidoyl-L-glutamate (transferase route): step 1/1. Functionally, folate-dependent enzyme, that displays both transferase and deaminase activity. Serves to channel one-carbon units from formiminoglutamate to the folate pool. Binds and promotes bundling of vimentin filaments originating from the Golgi. The chain is Formimidoyltransferase-cyclodeaminase (Ftcd) from Rattus norvegicus (Rat).